The chain runs to 146 residues: Large ribosomal subunit protein uL15 (146 aa).

Residues 1 to 13 (MKLHELKPAEGSR) show a composition bias toward basic and acidic residues. A disordered region spans residues 1–57 (MKLHELKPAEGSRKVRNRVGRGTSSGNGKTSGRGQKGQKARSGVGLRPGFEGGQTPL). Positions 23 to 35 (TSSGNGKTSGRGQ) are enriched in gly residues.

This sequence belongs to the universal ribosomal protein uL15 family. In terms of assembly, part of the 50S ribosomal subunit.

In terms of biological role, binds to the 23S rRNA. The sequence is that of Large ribosomal subunit protein uL15 from Streptococcus thermophilus (strain ATCC BAA-491 / LMD-9).